We begin with the raw amino-acid sequence, 471 residues long: Elongation factor 1-alpha (471 aa).

The 230-residue stretch at 10–239 (KPRLNACFIG…EALNYQDVPE (230 aa)) folds into the tr-type G domain. Positions 19–26 (GHVDSGKS) are G1. Residue 19–26 (GHVDSGKS) coordinates GTP. The tract at residues 75–79 (GITIT) is G2. The tract at residues 96–99 (DCPG) is G3. GTP is bound by residues 96–100 (DCPGH) and 156–159 (NKMD). The G4 stretch occupies residues 156 to 159 (NKMD). The G5 stretch occupies residues 196–198 (SAF).

It belongs to the TRAFAC class translation factor GTPase superfamily. Classic translation factor GTPase family. EF-Tu/EF-1A subfamily. In terms of assembly, component of the eukaryotic elongation factor 1 complex (eEF1).

The protein localises to the cytoplasm. The protein operates within protein biosynthesis; polypeptide chain elongation. Functionally, GTP-binding component of the eukaryotic elongation factor 1 complex (eEF1). In its active GTP-bound form, binds to and delivers aminoacyl-tRNA to the A-site of ribosomes during protein biosynthesis. In the presence of a correct codon-anticodon match between the aminoacyl-tRNA and the A-site codon of the ribosome-bound mRNA, the ribosome acts as a GTPase activator and the GTP is hydrolyzed. The inactive GDP-bound form leaves the ribosome and must be recycled by its guanine nucleotide exchange factor (GEF) (eEF1B subcomplex) before binding another molecule of aminoacyl-tRNA. Required for nuclear export of aminoacyl-tRNAs. May also be involved in translational quality control by targeting cotranslationally damaged proteins to the proteasome. In Encephalitozoon cuniculi (strain GB-M1) (Microsporidian parasite), this protein is Elongation factor 1-alpha (TEF1).